A 306-amino-acid polypeptide reads, in one-letter code: UDP-N-acetylenolpyruvoylglucosamine reductase (306 aa).

The 167-residue stretch at 28–194 (KIGNISKLFL…LKTELNLKKE (167 aa)) folds into the FAD-binding PCMH-type domain. The Proton donor role is filled by Ser-223. Glu-295 is a catalytic residue.

It belongs to the MurB family. Requires FAD as cofactor.

The protein localises to the cytoplasm. The catalysed reaction is UDP-N-acetyl-alpha-D-muramate + NADP(+) = UDP-N-acetyl-3-O-(1-carboxyvinyl)-alpha-D-glucosamine + NADPH + H(+). It participates in cell wall biogenesis; peptidoglycan biosynthesis. Its function is as follows. Cell wall formation. The chain is UDP-N-acetylenolpyruvoylglucosamine reductase from Borrelia garinii subsp. bavariensis (strain ATCC BAA-2496 / DSM 23469 / PBi) (Borreliella bavariensis).